The primary structure comprises 106 residues: Urease subunit beta (106 aa).

It belongs to the urease beta subunit family. As to quaternary structure, heterotrimer of UreA (gamma), UreB (beta) and UreC (alpha) subunits. Three heterotrimers associate to form the active enzyme.

The protein resides in the cytoplasm. The catalysed reaction is urea + 2 H2O + H(+) = hydrogencarbonate + 2 NH4(+). Its pathway is nitrogen metabolism; urea degradation; CO(2) and NH(3) from urea (urease route): step 1/1. This Klebsiella pneumoniae (strain 342) protein is Urease subunit beta.